Reading from the N-terminus, the 185-residue chain is Ribosome-recycling factor (185 aa).

It belongs to the RRF family.

It localises to the cytoplasm. Responsible for the release of ribosomes from messenger RNA at the termination of protein biosynthesis. May increase the efficiency of translation by recycling ribosomes from one round of translation to another. The protein is Ribosome-recycling factor of Sulfurovum sp. (strain NBC37-1).